Consider the following 118-residue polypeptide: Hydrogenase maturation factor HypA (118 aa).

Position 2 (His2) interacts with Ni(2+). The Zn(2+) site is built by Cys73, Cys76, Cys89, and Cys92.

This sequence belongs to the HypA/HybF family.

Functionally, involved in the maturation of [NiFe] hydrogenases. Required for nickel insertion into the metal center of the hydrogenase. The protein is Hydrogenase maturation factor HypA of Shewanella oneidensis (strain ATCC 700550 / JCM 31522 / CIP 106686 / LMG 19005 / NCIMB 14063 / MR-1).